A 354-amino-acid chain; its full sequence is Methionine import ATP-binding protein MetN (354 aa).

In terms of domain architecture, ABC transporter spans 8–250 (LDHIDITFRQ…PKEALTQEFI (243 aa)). 42-49 (GYSGAGKS) provides a ligand contact to ATP.

This sequence belongs to the ABC transporter superfamily. Methionine importer (TC 3.A.1.24) family. As to quaternary structure, the complex is composed of two ATP-binding proteins (MetN), two transmembrane proteins (MetI) and a solute-binding protein (MetQ).

It localises to the cell membrane. The catalysed reaction is L-methionine(out) + ATP + H2O = L-methionine(in) + ADP + phosphate + H(+). It catalyses the reaction D-methionine(out) + ATP + H2O = D-methionine(in) + ADP + phosphate + H(+). Part of the ABC transporter complex MetNIQ involved in methionine import. Responsible for energy coupling to the transport system. In Streptococcus pyogenes serotype M12 (strain MGAS2096), this protein is Methionine import ATP-binding protein MetN.